A 459-amino-acid polypeptide reads, in one-letter code: Cysteine--tRNA ligase (459 aa).

Cys27 is a Zn(2+) binding site. The 'HIGH' region motif lies at 29–39 (ITVYDDCHIGH). Zn(2+) contacts are provided by Cys208, His233, and Glu237. The 'KMSKS' region signature appears at 265-269 (KMSKS). Residue Lys268 coordinates ATP.

It belongs to the class-I aminoacyl-tRNA synthetase family. Monomer. Requires Zn(2+) as cofactor.

The protein resides in the cytoplasm. The enzyme catalyses tRNA(Cys) + L-cysteine + ATP = L-cysteinyl-tRNA(Cys) + AMP + diphosphate. The polypeptide is Cysteine--tRNA ligase (Francisella philomiragia subsp. philomiragia (strain ATCC 25017 / CCUG 19701 / FSC 153 / O#319-036)).